We begin with the raw amino-acid sequence, 351 residues long: Ribosomal RNA large subunit methyltransferase M (351 aa).

S-adenosyl-L-methionine-binding positions include serine 186, 219–222 (APGG), aspartate 238, aspartate 258, and aspartate 274. Lysine 303 acts as the Proton acceptor in catalysis.

It belongs to the class I-like SAM-binding methyltransferase superfamily. RNA methyltransferase RlmE family. RlmM subfamily. Monomer.

The protein localises to the cytoplasm. The catalysed reaction is cytidine(2498) in 23S rRNA + S-adenosyl-L-methionine = 2'-O-methylcytidine(2498) in 23S rRNA + S-adenosyl-L-homocysteine + H(+). In terms of biological role, catalyzes the 2'-O-methylation at nucleotide C2498 in 23S rRNA. This chain is Ribosomal RNA large subunit methyltransferase M, found in Xylella fastidiosa (strain M23).